The sequence spans 97 residues: Large ribosomal subunit protein eL21 (97 aa).

Belongs to the eukaryotic ribosomal protein eL21 family.

The polypeptide is Large ribosomal subunit protein eL21 (Methanococcoides burtonii (strain DSM 6242 / NBRC 107633 / OCM 468 / ACE-M)).